Consider the following 548-residue polypeptide: MHLVRWLICLIQLWIQLGAAGSVTLLDPLLIEIPNGKLRGRDNGHYYSYEAIPYAEPPTGELRFEVPKPYKQQWTNTFDATQPPVLCMQWNQFINGTNKLLGVEDCLTVSVYRPKNSSRNNFPVVANLHGGAFMFGGPSQYGHENIMREGSVILVTIGYRLGPLGFVSTGDADLSGNFGLKDQRLALLWIKQNIASFGGEPENILVVGHSAGGASVHLQMLREDFSKVAKAAISFSGNSLDPWVIQQGLRGRAFELGRIVGCGQASDSVTLKKCLKSKPAIEIVSAVRSFLVFSYVPFTPFGPAIESPDAPEAFITHHPIDIIKRGKFSQVPWAVTYTTEDGGYNAALLLEKQASSGRELIVDLNDRWFDWAPYLLFYRDSMTTIKDMDDYSRKLRQEYLGDRRFSVESYWDVQRMFTDLLFKNSVTVSVDLHRKYGKSPVYAFVYDNPSEVGVGQILSGRNDVYFGTVHGDDVFLIFNVSFVPANRRPDEEIISRNFIKMLEYFALSTDDTMAYGDCVFQNNVGSKHMQLLSITRDGCENKQLNFFI.

The N-terminal stretch at 1-19 (MHLVRWLICLIQLWIQLGA) is a signal peptide. Cys87 and Cys106 are oxidised to a cystine. 2 N-linked (GlcNAc...) asparagine glycosylation sites follow: Asn95 and Asn116. The Acyl-ester intermediate role is filled by Ser210. A disulfide bridge links Cys262 with Cys274. Asn479 is a glycosylation site (N-linked (GlcNAc...) asparagine). Cys518 and Cys539 are disulfide-bonded.

It belongs to the type-B carboxylesterase/lipase family.

It localises to the secreted. It carries out the reaction a carboxylic ester + H2O = an alcohol + a carboxylate + H(+). The sequence is that of Esterase-5A (Est-5A) from Drosophila persimilis (Fruit fly).